A 724-amino-acid polypeptide reads, in one-letter code: Pesticidal crystal protein Cry11Ba (724 aa).

Belongs to the delta endotoxin family.

Functionally, promotes colloidosmotic lysis by binding to the midgut epithelial cells of mosquitos. Active on Aedes aegypti, Culex pipiens and Anopheles stephensi larvae. This Bacillus thuringiensis subsp. jegathesan protein is Pesticidal crystal protein Cry11Ba (cry11Ba).